An 84-amino-acid chain; its full sequence is Delta-conotoxin-like MVIB (84 aa).

A signal peptide spans 1 to 22; it reads MKLTCVMIVAVLFLTAWTFVTA. Positions 23–51 are excised as a propeptide; the sequence is DDSRYGLKDLFPKERHEMKNPEASKLNQR. Disulfide bonds link Cys-54–Cys-69, Cys-61–Cys-73, and Cys-68–Cys-77. Pro-65 bears the 4-hydroxyproline mark. Ser-83 carries the serine amide modification.

It belongs to the conotoxin O1 superfamily. As to expression, expressed by the venom duct.

It is found in the secreted. Functionally, delta-conotoxins bind to site 6 of voltage-gated sodium channels (Nav) and inhibit the inactivation process. This Conus magus (Magical cone) protein is Delta-conotoxin-like MVIB.